Here is a 269-residue protein sequence, read N- to C-terminus: Fructose-2,6-bisphosphatase TIGAR (269 aa).

The Tele-phosphohistidine intermediate role is filled by His-11. Residue Glu-89 is the Proton donor/acceptor of the active site.

It belongs to the phosphoglycerate mutase family. In terms of assembly, interacts with HK2; the interaction increases hexokinase HK2 activity in a hypoxia- and HIF1A-dependent manner, resulting in the regulation of mitochondrial membrane potential, thus increasing NADPH production and decreasing intracellular ROS levels. Expressed in olfactory bulb, cerebellum, and cortex. Expressed in neurons and astrocytes (at protein level). Expressed in intestinal crypt.

It is found in the cytoplasm. The protein resides in the nucleus. Its subcellular location is the mitochondrion. The catalysed reaction is beta-D-fructose 2,6-bisphosphate + H2O = beta-D-fructose 6-phosphate + phosphate. Its function is as follows. Fructose-bisphosphatase hydrolyzing fructose-2,6-bisphosphate as well as fructose-1,6-bisphosphate. Acts as a negative regulator of glycolysis by lowering intracellular levels of fructose-2,6-bisphosphate in a p53/TP53-dependent manner, resulting in the pentose phosphate pathway (PPP) activation and NADPH production. Contributes to the generation of reduced glutathione to cause a decrease in intracellular reactive oxygen species (ROS) content, correlating with its ability to protect cells from oxidative or metabolic stress-induced cell death. Plays a role in promoting protection against cell death during hypoxia by decreasing mitochondria ROS levels in a HK2-dependent manner through a mechanism that is independent of its fructose-bisphosphatase activity. In response to cardiac damage stress, mediates p53-induced inhibition of myocyte mitophagy through ROS levels reduction and the subsequent inactivation of BNIP3. Reduced mitophagy results in an enhanced apoptotic myocyte cell death, and exacerbates cardiac damage. Plays a role in adult intestinal regeneration; contributes to the growth, proliferation and survival of intestinal crypts following tissue ablation. Plays a neuroprotective role against ischemic brain damage by enhancing PPP flux and preserving mitochondria functions. Protects glioma cells from hypoxia- and ROS-induced cell death by inhibiting glycolysis and activating mitochondrial energy metabolism and oxygen consumption in a TKTL1-dependent and p53/TP53-independent manner. Plays a role in cancer cell survival by promoting DNA repair through activating PPP flux in a CDK5-ATM-dependent signaling pathway during hypoxia and/or genome stress-induced DNA damage responses. Involved in intestinal tumor progression. The protein is Fructose-2,6-bisphosphatase TIGAR of Mus musculus (Mouse).